The primary structure comprises 422 residues: UPF0229 protein SO_2883 (422 aa).

The disordered stretch occupies residues 60-111 (SEPMFHQGKGGVRDRVHPGNDQFTRGDKIDRPQGGSGGGAGKGDASDSGEGN). The span at 70 to 90 (GVRDRVHPGNDQFTRGDKIDR) shows a compositional bias: basic and acidic residues.

The protein belongs to the UPF0229 family.

The protein is UPF0229 protein SO_2883 of Shewanella oneidensis (strain ATCC 700550 / JCM 31522 / CIP 106686 / LMG 19005 / NCIMB 14063 / MR-1).